The following is a 219-amino-acid chain: MARIEIDKMSKLLQVYFIMGSNNCTRDPLAVLKEALDGGVTIFQFREKGEGSLIGEDRVRFAKELQTLCNEYSVPFIVNDDVELAIELDADGVHVGQDDEGITSVREKMGDKIIGVSAHTIEEARFAIENGADYLGVGPIFPTSTKKDTKAVQGTKGLAYFREQGITVPIVGIGGITIENTAAVIEAGADGVSVISAISLAESAYESTRKLAEEVKRSL.

Residues 44–48 (QFREK) and asparagine 79 each bind 4-amino-2-methyl-5-(diphosphooxymethyl)pyrimidine. Aspartate 80 and aspartate 99 together coordinate Mg(2+). Serine 117 is a 4-amino-2-methyl-5-(diphosphooxymethyl)pyrimidine binding site. 143 to 145 (TST) contributes to the 2-[(2R,5Z)-2-carboxy-4-methylthiazol-5(2H)-ylidene]ethyl phosphate binding site. Position 146 (lysine 146) interacts with 4-amino-2-methyl-5-(diphosphooxymethyl)pyrimidine. 2-[(2R,5Z)-2-carboxy-4-methylthiazol-5(2H)-ylidene]ethyl phosphate is bound by residues glycine 175 and 195–196 (IS).

This sequence belongs to the thiamine-phosphate synthase family. Mg(2+) is required as a cofactor.

It carries out the reaction 2-[(2R,5Z)-2-carboxy-4-methylthiazol-5(2H)-ylidene]ethyl phosphate + 4-amino-2-methyl-5-(diphosphooxymethyl)pyrimidine + 2 H(+) = thiamine phosphate + CO2 + diphosphate. The enzyme catalyses 2-(2-carboxy-4-methylthiazol-5-yl)ethyl phosphate + 4-amino-2-methyl-5-(diphosphooxymethyl)pyrimidine + 2 H(+) = thiamine phosphate + CO2 + diphosphate. It catalyses the reaction 4-methyl-5-(2-phosphooxyethyl)-thiazole + 4-amino-2-methyl-5-(diphosphooxymethyl)pyrimidine + H(+) = thiamine phosphate + diphosphate. Its pathway is cofactor biosynthesis; thiamine diphosphate biosynthesis; thiamine phosphate from 4-amino-2-methyl-5-diphosphomethylpyrimidine and 4-methyl-5-(2-phosphoethyl)-thiazole: step 1/1. Its function is as follows. Condenses 4-methyl-5-(beta-hydroxyethyl)thiazole monophosphate (THZ-P) and 2-methyl-4-amino-5-hydroxymethyl pyrimidine pyrophosphate (HMP-PP) to form thiamine monophosphate (TMP). This is Thiamine-phosphate synthase from Bacillus cereus (strain ATCC 14579 / DSM 31 / CCUG 7414 / JCM 2152 / NBRC 15305 / NCIMB 9373 / NCTC 2599 / NRRL B-3711).